A 627-amino-acid chain; its full sequence is MDLISVLPSASKSCVCLHKPLSSSTHKLKPFCRKIRILGMPRPRKSVLMVSSMSISVNTLVSDDAVQRRTGGYHSNLWNDDVIQFLSTPYGELAYRERAERLIDEVRNIFSSMSLEDGESSDLIQRLWMVDNVERLGIDRHFKNEIKSALDYVYSYWSQKGIGCGTKSIITDLNSTALGFRILRLHGYPVSAEVFKHFRNQIGQFVSCHSETEEDIRSIVNLYRASLIAFPGEKVMEEAEIFSEKYLKETLQKIPDCSLSREIGDVLEHGWHTNLPRFEARNYMDVFGQDTKNMESNRKAEKLLELAKLEFNIFQSIQKTELESLLRWWNDSGSPQITFTRHRHVEYYTLASCIAFEPQHSGFRLGFAKACHIITVLDDMYDLFGTVEELKLFTAAIKRWDPSATDCLPQYMKGIYMMVYNTVNEMSAEAQKAQRRDTLNYARQAWEVYLDSYMQEAKWIATGYLPTFEEYLENGKVSSGHRVSALQPMLTMDIPFPPHILKEVDFPSNLNDLACAILRLRGDTRCYQEDRARGEETSCISCYMKDNPGATEEDALNHLNVMISGVIKELNWELLKPDSSVPISSKKINFDITRAFHYGYKYRDGYSVSSVETKSLVMRTLLEPVPL.

The transit peptide at 1-51 (MDLISVLPSASKSCVCLHKPLSSSTHKLKPFCRKIRILGMPRPRKSVLMVS) directs the protein to the chloroplast. 3 residues coordinate Mg(2+): Asp-378, Asp-382, and Asp-530. A DDXXD motif motif is present at residues 378-382 (DDMYD).

The protein belongs to the terpene synthase family. Tpsd subfamily. Mg(2+) is required as a cofactor. Mn(2+) serves as cofactor.

It is found in the plastid. It localises to the chloroplast. The catalysed reaction is (2E)-geranyl diphosphate = (1S,5S)-beta-pinene + diphosphate. It carries out the reaction (2E)-geranyl diphosphate = (1S,5S)-alpha-pinene + diphosphate. The protein operates within terpene metabolism; oleoresin biosynthesis. It participates in secondary metabolite biosynthesis; terpenoid biosynthesis. Functionally, monoterpene synthase (TPS) involved in the biosynthesis of monoterpene natural products included in conifer oleoresin secretions and volatile emissions; these compounds contribute to biotic and abiotic stress defense against herbivores and pathogens. Catalyzes the conversion of (2E)-geranyl diphosphate (GPP) to (-)-beta-pinene and, to a lower extent, to (-)-alpha-pinene. This is (-)-beta-pinene synthase 2, chloroplastic from Pinus banksiana (Jack pine).